Here is a 368-residue protein sequence, read N- to C-terminus: Probable endopolygalacturonase I (368 aa).

An N-terminal signal peptide occupies residues 1-18 (MRSVEILGLAALGSLVAA). Residues 19–31 (APSPSRVSNSAKK) constitute a propeptide that is removed on maturation. A disulfide bridge links Cys-35 with Cys-50. PbH1 repeat units follow at residues 162-192 (ATNLQLTDITIDNSDGDENGGHNTDAFDIGE) and 193-214 (SNGVYIRGAVVKNQDDCIAINS). The Proton donor role is filled by Asp-207. Cysteines 209 and 225 form a disulfide. The active site involves His-229. PbH1 repeat units follow at residues 244 to 265 (VKNVTITDSTISDSDNGVRIKT), 273 to 295 (VGDVTYSNIKLSNIAKYGIVIEQ), and 307 to 328 (TTGVPITGLTIDGITGSVASNA). N-linked (GlcNAc...) asparagine glycosylation is present at Asn-246. 2 disulfides stabilise this stretch: Cys-335–Cys-340 and Cys-359–Cys-368.

It belongs to the glycosyl hydrolase 28 family.

Its subcellular location is the secreted. The enzyme catalyses (1,4-alpha-D-galacturonosyl)n+m + H2O = (1,4-alpha-D-galacturonosyl)n + (1,4-alpha-D-galacturonosyl)m.. Its function is as follows. Involved in maceration and soft-rotting of plant tissue. Hydrolyzes the 1,4-alpha glycosidic bonds of de-esterified pectate in the smooth region of the plant cell wall. The sequence is that of Probable endopolygalacturonase I (pgaI) from Aspergillus clavatus (strain ATCC 1007 / CBS 513.65 / DSM 816 / NCTC 3887 / NRRL 1 / QM 1276 / 107).